A 209-amino-acid polypeptide reads, in one-letter code: MSISKAIAADLLEIKAVSLSPSQPFTWASGIKSPIYTDNRVTLAYPEVRSQIEGAFAELIKTEFPEVEVIAGTATAGIPHGAIIADYLKLPFAYIRSKPKDHGAGNQVEGRVAKGQKMVVVEDLISTGGSVLEAVAAAEREGADVLGVVAIFTYELEKANSKFADADVKLATLTNYSELIEIAKETGYVTKEELELLKKFKENQETWQA.

5-phospho-alpha-D-ribose 1-diphosphate is bound by residues R96, K100, H102, and 122 to 130 (EDLISTGGS). S126 is a binding site for orotate.

This sequence belongs to the purine/pyrimidine phosphoribosyltransferase family. PyrE subfamily. Homodimer. It depends on Mg(2+) as a cofactor.

The catalysed reaction is orotidine 5'-phosphate + diphosphate = orotate + 5-phospho-alpha-D-ribose 1-diphosphate. Its pathway is pyrimidine metabolism; UMP biosynthesis via de novo pathway; UMP from orotate: step 1/2. In terms of biological role, catalyzes the transfer of a ribosyl phosphate group from 5-phosphoribose 1-diphosphate to orotate, leading to the formation of orotidine monophosphate (OMP). The protein is Orotate phosphoribosyltransferase of Lactococcus lactis subsp. cremoris (strain MG1363).